Consider the following 138-residue polypeptide: Gas vesicle protein A (138 aa).

A disordered region spans residues 74-138 (EAGPRKDPGL…STSRKKEEQE (65 aa)). Low complexity predominate over residues 116–129 (GSSSGSSSGSSSRS).

Belongs to the gas vesicle GvpA family. As to quaternary structure, the gas vesicle shell is 2 nm thick and consists of a single layer of this protein. It forms helical ribs nearly perpendicular to the long axis of the vesicle.

The protein resides in the gas vesicle shell. Its function is as follows. Gas vesicles are hollow, gas filled proteinaceous nanostructures found in some microorganisms. During planktonic growth they allow positioning of the organism at a favorable depth for light or nutrient acquisition. GvpA forms the protein shell. It is not clear what function gas vesicles perform in soil bacteria. This is Gas vesicle protein A from Streptomyces sp. (strain CB03234).